The sequence spans 114 residues: Iron-sulfur cluster insertion protein ErpA (114 aa).

Iron-sulfur cluster contacts are provided by cysteine 42, cysteine 106, and cysteine 108.

This sequence belongs to the HesB/IscA family. As to quaternary structure, homodimer. Requires iron-sulfur cluster as cofactor.

Functionally, required for insertion of 4Fe-4S clusters for at least IspG. This is Iron-sulfur cluster insertion protein ErpA from Salmonella typhi.